A 972-amino-acid polypeptide reads, in one-letter code: Mast/stem cell growth factor receptor Kit (972 aa).

Residues 1 to 25 (MRGARRAWDFLFVLQLLLRVQTGSS) form the signal peptide. Residues 26–520 (QPSVSPEELS…QIHAHTLFTP (495 aa)) are Extracellular-facing. 5 consecutive Ig-like C2-type domains span residues 27–112 (PSVS…VFVR), 121–205 (DPPL…LKVR), 212–308 (PVVA…LEVV), 317–410 (PMMN…VYVN), and 413–507 (PEIL…FNFA). 4 cysteine pairs are disulfide-bonded: Cys58-Cys97, Cys136-Cys186, Cys151-Cys183, and Cys233-Cys290. 2 N-linked (GlcNAc...) asparagine glycosylation sites follow: Asn94 and Asn145. 9 N-linked (GlcNAc...) asparagine glycosylation sites follow: Asn283, Asn293, Asn300, Asn320, Asn352, Asn367, Asn400, Asn463, and Asn486. A disulfide bond links Cys428 and Cys491. The chain crosses the membrane as a helical span at residues 521 to 541 (LLIGFVIAAGMMCIIVMILTY). The Cytoplasmic portion of the chain corresponds to 542–972 (KYLQKPMYEV…TQPLLVHEDV (431 aa)). Tyr543, Tyr549, Tyr564, and Tyr566 each carry phosphotyrosine; by autocatalysis. Tyr564 provides a ligand contact to Mg(2+). The important for interaction with phosphotyrosine-binding proteins stretch occupies residues 564-566 (YVY). The region spanning 585–933 (LSFGKTLGAG…ISESTNHIYS (349 aa)) is the Protein kinase domain. Residues 592 to 599 (GAGAFGKV), Lys619, and 667 to 673 (EYCCYGD) each bind ATP. Residues Tyr699, Tyr717, and Tyr726 each carry the phosphotyrosine; by autocatalysis modification. Phosphoserine; by PKC/PRKCA occurs at positions 737 and 742. The active-site Proton acceptor is Asp788. Residue Arg792 coordinates ATP. 2 residues coordinate Mg(2+): Asn793 and Asp806. At Ser817 the chain carries Phosphoserine. Phosphotyrosine; by autocatalysis is present on Tyr819. Ser887 carries the phosphoserine modification. Residues Tyr896 and Tyr932 each carry the phosphotyrosine; by autocatalysis modification. Ser955 bears the Phosphoserine mark.

The protein belongs to the protein kinase superfamily. Tyr protein kinase family. CSF-1/PDGF receptor subfamily. In terms of assembly, monomer in the absence of bound KITLG/SCF. Homodimer in the presence of bound KITLG/SCF, forming a heterotetramer with two KITLG/SCF molecules. Interacts (via phosphorylated tyrosine residues) with the adapter proteins GRB2 and GRB7 (via SH2 domain), and SH2B2/APS. Interacts (via C-terminus) with MPDZ (via the tenth PDZ domain). Interacts (via phosphorylated tyrosine residues) with PIK3R1 and PIK3 catalytic subunit. Interacts (via phosphorylated tyrosine) with CRK (isoform Crk-II), FYN, SHC1 and MATK/CHK (via SH2 domain). Interacts with LYN and FES/FPS. Interacts (via phosphorylated tyrosine residues) with the protein phosphatases PTPN6/SHP-1 (via SH2 domain), PTPN11/SHP-2 (via SH2 domain) and PTPRU. Interacts with PLCG1. Interacts with DOK1 and TEC. Interacts with IL1RAP (independent of stimulation with KITLG/SCF). A mast cell-specific KITLG/SCF-induced interleukin-33 signaling complex contains IL1RL1, IL1RAP, KIT and MYD88. Post-translationally, ubiquitinated by SOCS6. KIT is rapidly ubiquitinated after autophosphorylation induced by KITLG/SCF binding, leading to internalization and degradation. Autophosphorylated on tyrosine residues. KITLG/SCF binding promotes autophosphorylation. Phosphorylated tyrosine residues are important for interaction with specific binding partners.

Its subcellular location is the cell membrane. It catalyses the reaction L-tyrosyl-[protein] + ATP = O-phospho-L-tyrosyl-[protein] + ADP + H(+). With respect to regulation, present in an inactive conformation in the absence of bound ligand. KITLG/SCF binding leads to dimerization and activation by autophosphorylation on tyrosine residues. Activity is down-regulated by PRKCA-mediated phosphorylation on serine residues. Functionally, tyrosine-protein kinase that acts as a cell-surface receptor for the cytokine KITLG/SCF and plays an essential role in the regulation of cell survival and proliferation, hematopoiesis, stem cell maintenance, gametogenesis, mast cell development, migration and function, and in melanogenesis. In response to KITLG/SCF binding, KIT can activate several signaling pathways. Phosphorylates PIK3R1, PLCG1, SH2B2/APS and CBL. Activates the AKT1 signaling pathway by phosphorylation of PIK3R1, the regulatory subunit of phosphatidylinositol 3-kinase. Activated KIT also transmits signals via GRB2 and activation of RAS, RAF1 and the MAP kinases MAPK1/ERK2 and/or MAPK3/ERK1. Promotes activation of STAT family members STAT1, STAT3, STAT5A and STAT5B. Activation of PLCG1 leads to the production of the cellular signaling molecules diacylglycerol and inositol 1,4,5-trisphosphate. KIT signaling is modulated by protein phosphatases, and by rapid internalization and degradation of the receptor. Activated KIT promotes phosphorylation of the protein phosphatases PTPN6/SHP-1 and PTPRU, and of the transcription factors STAT1, STAT3, STAT5A and STAT5B. Promotes phosphorylation of PIK3R1, CBL, CRK (isoform Crk-II), LYN, MAPK1/ERK2 and/or MAPK3/ERK1, PLCG1, SRC and SHC1. The chain is Mast/stem cell growth factor receptor Kit (KIT) from Sus scrofa (Pig).